Reading from the N-terminus, the 421-residue chain is C4-dicarboxylate transport protein (421 aa).

Transmembrane regions (helical) follow at residues 9–29 (VQVI…PDVG), 39–59 (FINA…VLGI), 76–96 (FIYF…VVNI), 145–165 (GDIL…AALG), 185–205 (IIGY…AYTI), 219–239 (LMMS…NIIC), 316–336 (VFGV…LMLT), and 348–368 (FIVL…GLAL).

Belongs to the dicarboxylate/amino acid:cation symporter (DAACS) (TC 2.A.23) family.

It is found in the cell membrane. Its function is as follows. Responsible for the transport of succinate and fumarate, but not malate, across the membrane. The polypeptide is C4-dicarboxylate transport protein (dctA) (Bacillus subtilis (strain 168)).